The sequence spans 343 residues: Dimethyladenosine transferase 1, mitochondrial (343 aa).

The transit peptide at 1–27 (MAASGKLSTWRLPPLPTIREIIKLLRV) directs the protein to the mitochondrion. 7 residues coordinate S-adenosyl-L-methionine: Leu-38, Gly-63, Glu-85, Lys-86, Asp-111, Val-112, and Asn-141.

This sequence belongs to the class I-like SAM-binding methyltransferase superfamily. rRNA adenine N(6)-methyltransferase family. KsgA subfamily. Interacts with mitochondrial RNA polymerase POLRMT. Interacts with TFAM. Bound to the maturing mtSSU until the late stages of assembly.

Its subcellular location is the mitochondrion. It carries out the reaction adenosine(N)/adenosine(N+1) in rRNA + 4 S-adenosyl-L-methionine = N(6)-dimethyladenosine(N)/N(6)-dimethyladenosine(N+1) in rRNA + 4 S-adenosyl-L-homocysteine + 4 H(+). S-adenosyl-L-methionine-dependent methyltransferase which specifically dimethylates mitochondrial 12S rRNA at the conserved stem loop. Also required for basal transcription of mitochondrial DNA, probably via its interaction with POLRMT and TFAM. Stimulates transcription independently of the methyltransferase activity. Functionally, mitochondrial methyltransferase which uses S-adenosyl methionine to dimethylate two highly conserved adjacent adenosine residues (A1583 and A1584) within the loop of helix 45 at the 3-prime end of 12S rRNA, thereby regulating the assembly or stability of the small subunit of the mitochondrial ribosome. Also required for basal transcription of mitochondrial DNA, probably via its interaction with POLRMT and TFAM. Stimulates transcription independently of the methyltransferase activity. The chain is Dimethyladenosine transferase 1, mitochondrial (TFB1M) from Pongo abelii (Sumatran orangutan).